Here is a 201-residue protein sequence, read N- to C-terminus: MQPFTSHTGLAVMIDSANIDTDQIIPKQFLSKVTRDGFGVHLFHDWRYLDDAGDVPNPDFTLNKPRYSGASILLAQENFGCGSSREHAPWALADFGLRAIIAPSFADIFYGNSINNGLLPVKLSANEVRQLMDEVASEEGAQITVDLTTCKVISPSGAEFSFTLAESARHKLLNGLDAIGLTLSHGTQIGEYEANIPSWRR.

This sequence belongs to the LeuD family. LeuD type 1 subfamily. In terms of assembly, heterodimer of LeuC and LeuD.

It catalyses the reaction (2R,3S)-3-isopropylmalate = (2S)-2-isopropylmalate. Its pathway is amino-acid biosynthesis; L-leucine biosynthesis; L-leucine from 3-methyl-2-oxobutanoate: step 2/4. Catalyzes the isomerization between 2-isopropylmalate and 3-isopropylmalate, via the formation of 2-isopropylmaleate. This is 3-isopropylmalate dehydratase small subunit from Shewanella sp. (strain MR-4).